A 399-amino-acid polypeptide reads, in one-letter code: 1-deoxy-D-xylulose 5-phosphate reductoisomerase (399 aa).

5 residues coordinate NADPH: T13, G14, S15, I16, and N127. K128 contacts 1-deoxy-D-xylulose 5-phosphate. NADPH is bound at residue E129. Residue D153 coordinates Mn(2+). Residues S154, E155, S187, and H210 each contribute to the 1-deoxy-D-xylulose 5-phosphate site. A Mn(2+)-binding site is contributed by E155. Residue G216 participates in NADPH binding. 1-deoxy-D-xylulose 5-phosphate is bound by residues S223, N228, K229, and E232. E232 is a Mn(2+) binding site.

It belongs to the DXR family. The cofactor is Mg(2+). Requires Mn(2+) as cofactor.

It catalyses the reaction 2-C-methyl-D-erythritol 4-phosphate + NADP(+) = 1-deoxy-D-xylulose 5-phosphate + NADPH + H(+). It participates in isoprenoid biosynthesis; isopentenyl diphosphate biosynthesis via DXP pathway; isopentenyl diphosphate from 1-deoxy-D-xylulose 5-phosphate: step 1/6. Catalyzes the NADPH-dependent rearrangement and reduction of 1-deoxy-D-xylulose-5-phosphate (DXP) to 2-C-methyl-D-erythritol 4-phosphate (MEP). The chain is 1-deoxy-D-xylulose 5-phosphate reductoisomerase from Bordetella petrii (strain ATCC BAA-461 / DSM 12804 / CCUG 43448).